The following is a 429-amino-acid chain: Dual-specificity RNA methyltransferase RlmN (429 aa).

The segment at 1–23 (MRAMQTHTEIAPMPIPGHVDPVP) is disordered. The Proton acceptor role is filled by Glu-128. Residues 134–397 (DADRGTLCVS…APVRTPRGRD (264 aa)) enclose the Radical SAM core domain. Residues Cys-141 and Cys-402 are joined by a disulfide bond. The [4Fe-4S] cluster site is built by Cys-148, Cys-152, and Cys-155. S-adenosyl-L-methionine contacts are provided by residues 226–227 (GE), Ser-258, 280–282 (SLH), and Asn-359. The S-methylcysteine intermediate role is filled by Cys-402.

Belongs to the radical SAM superfamily. RlmN family. [4Fe-4S] cluster serves as cofactor.

The protein resides in the cytoplasm. It catalyses the reaction adenosine(2503) in 23S rRNA + 2 reduced [2Fe-2S]-[ferredoxin] + 2 S-adenosyl-L-methionine = 2-methyladenosine(2503) in 23S rRNA + 5'-deoxyadenosine + L-methionine + 2 oxidized [2Fe-2S]-[ferredoxin] + S-adenosyl-L-homocysteine. The catalysed reaction is adenosine(37) in tRNA + 2 reduced [2Fe-2S]-[ferredoxin] + 2 S-adenosyl-L-methionine = 2-methyladenosine(37) in tRNA + 5'-deoxyadenosine + L-methionine + 2 oxidized [2Fe-2S]-[ferredoxin] + S-adenosyl-L-homocysteine. Specifically methylates position 2 of adenine 2503 in 23S rRNA and position 2 of adenine 37 in tRNAs. m2A2503 modification seems to play a crucial role in the proofreading step occurring at the peptidyl transferase center and thus would serve to optimize ribosomal fidelity. This chain is Dual-specificity RNA methyltransferase RlmN, found in Novosphingobium aromaticivorans (strain ATCC 700278 / DSM 12444 / CCUG 56034 / CIP 105152 / NBRC 16084 / F199).